The following is a 238-amino-acid chain: Fish-egg lectin (238 aa).

A run of 5 repeats spans residues 1–34 (LDCT…VLID), 35–68 (NVFT…KYQS), 69–106 (GGFV…MDAN), 107–156 (NKWP…CSGS), and 157–199 (GSFI…KPDG). Residues 1–199 (LDCTVIDGNL…TGVTRSKPDG (199 aa)) form a 5 X approximate tandem repeats region. 4 disulfide bridges follow: cysteine 3–cysteine 234, cysteine 100–cysteine 153, cysteine 128–cysteine 133, and cysteine 208–cysteine 226. Residue asparagine 27 is glycosylated (N-linked (GlcNAc...) asparagine).

The protein belongs to the tectonin family. As to expression, expressed in the eggs.

Its subcellular location is the secreted. In terms of biological role, lipopolysaccharide-binding protein with a very low agglutinating activity for human A-type erythrocytes and interacts with both Gram-positive and Gram-negative bacteria. The polypeptide is Fish-egg lectin (Cyprinus carpio (Common carp)).